A 282-amino-acid chain; its full sequence is Probable protein phosphatase 2C 45 (282 aa).

The 246-residue stretch at 27 to 272 (SYGYASSPGK…DNITCVVVRF (246 aa)) folds into the PPM-type phosphatase domain. Mn(2+) contacts are provided by Asp-63, Gly-64, Asp-224, and Asp-263.

It belongs to the PP2C family. Mg(2+) serves as cofactor. The cofactor is Mn(2+).

It catalyses the reaction O-phospho-L-seryl-[protein] + H2O = L-seryl-[protein] + phosphate. The enzyme catalyses O-phospho-L-threonyl-[protein] + H2O = L-threonyl-[protein] + phosphate. The polypeptide is Probable protein phosphatase 2C 45 (Oryza sativa subsp. japonica (Rice)).